A 698-amino-acid chain; its full sequence is Putative transposon gamma-delta 80.3 kDa protein (698 aa).

The sequence is that of Putative transposon gamma-delta 80.3 kDa protein (tnpX) from Escherichia coli (strain K12).